Reading from the N-terminus, the 501-residue chain is 2,3-bisphosphoglycerate-independent phosphoglycerate mutase (501 aa).

Positions 12 and 62 each coordinate Mn(2+). S62 acts as the Phosphoserine intermediate in catalysis. Substrate-binding positions include H121, R150–D151, R182, R188, R253–R256, and K323. 5 residues coordinate Mn(2+): D390, H394, D431, H432, and H450.

Belongs to the BPG-independent phosphoglycerate mutase family. Monomer. It depends on Mn(2+) as a cofactor.

The enzyme catalyses (2R)-2-phosphoglycerate = (2R)-3-phosphoglycerate. The protein operates within carbohydrate degradation; glycolysis; pyruvate from D-glyceraldehyde 3-phosphate: step 3/5. Its function is as follows. Catalyzes the interconversion of 2-phosphoglycerate and 3-phosphoglycerate. The protein is 2,3-bisphosphoglycerate-independent phosphoglycerate mutase of Ehrlichia canis (strain Jake).